The primary structure comprises 128 residues: Nucleoside diphosphate kinase B (128 aa).

Position 1 is an N-acetylmethionine (M1). ATP contacts are provided by K9, F39, T70, R81, and N91. H94 serves as the catalytic Pros-phosphohistidine intermediate.

It belongs to the NDK family. It depends on Mg(2+) as a cofactor.

It is found in the cytoplasm. The protein localises to the nucleus. Its subcellular location is the cell projection. It localises to the lamellipodium. The protein resides in the ruffle. It catalyses the reaction a 2'-deoxyribonucleoside 5'-diphosphate + ATP = a 2'-deoxyribonucleoside 5'-triphosphate + ADP. The catalysed reaction is a ribonucleoside 5'-diphosphate + ATP = a ribonucleoside 5'-triphosphate + ADP. Functionally, major role in the synthesis of nucleoside triphosphates other than ATP. This is Nucleoside diphosphate kinase B (nme2) from Merluccius bilinearis (Silver hake).